The following is a 195-amino-acid chain: Glucagon family neuropeptides (195 aa).

A signal peptide spans 1–20 (MAKSSRATLALLIYGILMRY). The propeptide occupies 21-82 (SQCTPIGMGF…YYPPERRAET (62 aa)). Residues 113-132 (VGEEEEDEEDSEPLSKRHSD) form a disordered region. A compositionally biased stretch (acidic residues) spans 115-124 (EEEEDEEDSE). Lys167 bears the Lysine amide mark. Positions 171–195 (LVVPSVWTGIRDTVIITPEKRGKRY) are excised as a propeptide.

This sequence belongs to the glucagon family. Brain, testis, ovary and stomach. Not pancreas, pituitary, muscle and liver.

The protein resides in the secreted. Primary role of GHRH is to release GH from the pituitary. Functionally, PACAP plays pivotal roles as a neurotransmitter and/or a neuromodulator. This is Glucagon family neuropeptides from Clarias macrocephalus (Bighead catfish).